Reading from the N-terminus, the 299-residue chain is Oxygen-dependent coproporphyrinogen-III oxidase (299 aa).

Ser-92 contributes to the substrate binding site. The a divalent metal cation site is built by His-96 and His-106. Catalysis depends on His-106, which acts as the Proton donor. Residue 108–110 (NVR) coordinates substrate. Residues His-145 and His-175 each coordinate a divalent metal cation. Positions 240-275 (YVEFNLVWDRGTLFGLQTGGRTESILMSMPPLVRWE) are important for dimerization. 258-260 (GGR) lines the substrate pocket.

It belongs to the aerobic coproporphyrinogen-III oxidase family. As to quaternary structure, homodimer. It depends on a divalent metal cation as a cofactor.

The protein localises to the cytoplasm. The enzyme catalyses coproporphyrinogen III + O2 + 2 H(+) = protoporphyrinogen IX + 2 CO2 + 2 H2O. The protein operates within porphyrin-containing compound metabolism; protoporphyrin-IX biosynthesis; protoporphyrinogen-IX from coproporphyrinogen-III (O2 route): step 1/1. Involved in the heme biosynthesis. Catalyzes the aerobic oxidative decarboxylation of propionate groups of rings A and B of coproporphyrinogen-III to yield the vinyl groups in protoporphyrinogen-IX. This Salmonella paratyphi B (strain ATCC BAA-1250 / SPB7) protein is Oxygen-dependent coproporphyrinogen-III oxidase.